Reading from the N-terminus, the 476-residue chain is PTS system N-acetylmuramic acid-specific EIIBC component (476 aa).

In terms of domain architecture, PTS EIIB type-1 spans 1 to 89 (MATIDNAMIH…KASLGDNMSS (89 aa)). C28 acts as the Phosphocysteine intermediate; for EIIB activity in catalysis. The region spanning 116-476 (AKFATIFTPL…FFATKDVDLS (361 aa)) is the PTS EIIC type-1 domain. A run of 10 helical transmembrane segments spans residues 118 to 138 (FATI…LLGL), 160 to 180 (LIAY…ILIG), 186 to 206 (AFGG…LGYN), 220 to 240 (FFGL…AAIV), 265 to 285 (TLLI…VYLF), 304 to 324 (VLAG…FVPV), 337 to 357 (LFPV…ALYF), 371 to 391 (GAII…VTLP), 396 to 416 (FITA…IAYL), and 443 to 463 (VLPA…TGFI).

Its subcellular location is the cell inner membrane. The enzyme catalyses N-acetyl-beta-D-muramate(out) + N(pros)-phospho-L-histidyl-[protein] = N-acetyl-beta-D-muramate 6-phosphate(in) + L-histidyl-[protein]. In terms of biological role, the phosphoenolpyruvate-dependent sugar phosphotransferase system (sugar PTS), a major carbohydrate active transport system, catalyzes the phosphorylation of incoming sugar substrates concomitantly with their translocation across the cell membrane. This system is involved in N-acetylmuramic acid (MurNAc) transport, yielding cytoplasmic MurNAc-6-P. Is also able to take up anhydro-N-acetylmuramic acid (anhMurNAc), but cannot phosphorylate the carbon 6, probably because of the 1,6-anhydro ring. The protein is PTS system N-acetylmuramic acid-specific EIIBC component (murP) of Pasteurella multocida (strain Pm70).